A 59-amino-acid chain; its full sequence is Zinc finger protein HVO_2753 (59 aa).

4 consecutive short sequence motifs (c(P)XCG motif) follow at residues 12-16 (CVSCG), 29-33 (CPDCG), 39-43 (CSKCR), and 51-55 (CPDCG). Cysteine 29 and cysteine 32 together coordinate Zn(2+). Zn(2+)-binding residues include cysteine 51 and cysteine 54.

In terms of assembly, monomer in solution.

Its function is as follows. Zinc-binding protein that binds only one zinc ion. Is required for swarming and biofilm formation. The chain is Zinc finger protein HVO_2753 from Haloferax volcanii (strain ATCC 29605 / DSM 3757 / JCM 8879 / NBRC 14742 / NCIMB 2012 / VKM B-1768 / DS2) (Halobacterium volcanii).